The chain runs to 81 residues: Acyl carrier protein (81 aa).

The Carrier domain occupies 2-80; the sequence is ASKDEILAGL…DAVNFIDNAQ (79 aa). Position 40 is an O-(pantetheine 4'-phosphoryl)serine (Ser-40).

The protein belongs to the acyl carrier protein (ACP) family. Post-translationally, 4'-phosphopantetheine is transferred from CoA to a specific serine of apo-ACP by AcpS. This modification is essential for activity because fatty acids are bound in thioester linkage to the sulfhydryl of the prosthetic group.

Its subcellular location is the cytoplasm. Its pathway is lipid metabolism; fatty acid biosynthesis. Its function is as follows. Carrier of the growing fatty acid chain in fatty acid biosynthesis. The protein is Acyl carrier protein of Kocuria rhizophila (strain ATCC 9341 / DSM 348 / NBRC 103217 / DC2201).